The following is a 338-amino-acid chain: POU domain, class 4, transcription factor 3 (338 aa).

Residues 56-65 (RAEALAAVDI) carry the POU-IV box motif. The region spanning 179–256 (DVESDPRELE…VLQAWLEEAE (78 aa)) is the POU-specific domain. A DNA-binding region (homeobox) is located at residues 274–333 (RKRKRTSIAAPEKRSLEAYFAIQPRPSSEKIAAIAEKLDLKKNVVRVWFCNQRQKQKRMK).

This sequence belongs to the POU transcription factor family. Class-4 subfamily. In terms of assembly, interacts with ISL1. As to expression, brain.

The protein resides in the nucleus. It localises to the cytoplasm. In terms of biological role, acts as a transcriptional activator. Acts by binding to sequences related to the consensus octamer motif 5'-ATGCAAAT-3' in the regulatory regions of its target genes. Involved in the auditory system development, required for terminal differentiation of hair cells in the inner ear. In Mus musculus (Mouse), this protein is POU domain, class 4, transcription factor 3.